Consider the following 1504-residue polypeptide: DNA-directed RNA polymerase subunit beta' (1504 aa).

Zn(2+)-binding residues include C60, C62, C75, and C78. The interval 265–294 (RKQRDLEDAEQLTGAERERKEYEASQERER) is disordered. Positions 279–294 (AERERKEYEASQERER) are enriched in basic and acidic residues. Residues D626, D628, and D630 each contribute to the Mg(2+) site. The Zn(2+) site is built by C1002, C1075, C1082, and C1085. The segment at 1468-1504 (RALIGGDGDDGERNNGDFDDQVGEDVVIPPDDDDQEA) is disordered.

Belongs to the RNA polymerase beta' chain family. In terms of assembly, the RNAP catalytic core consists of 2 alpha, 1 beta, 1 beta' and 1 omega subunit. When a sigma factor is associated with the core the holoenzyme is formed, which can initiate transcription. Mg(2+) is required as a cofactor. It depends on Zn(2+) as a cofactor.

It catalyses the reaction RNA(n) + a ribonucleoside 5'-triphosphate = RNA(n+1) + diphosphate. DNA-dependent RNA polymerase catalyzes the transcription of DNA into RNA using the four ribonucleoside triphosphates as substrates. In Roseiflexus sp. (strain RS-1), this protein is DNA-directed RNA polymerase subunit beta'.